Here is a 609-residue protein sequence, read N- to C-terminus: Wee1-like protein kinase (609 aa).

The span at 1–10 (MAFRQSEHEM) shows a compositional bias: basic and acidic residues. Disordered regions lie at residues 1–88 (MAFR…SMSP) and 147–166 (PLHN…PFTP). 3 positions are modified to phosphoserine: serine 23, serine 25, and serine 27. Over residues 37–48 (RFADDDFDKDTP) the composition is skewed to basic and acidic residues. Threonine 47 is modified (phosphothreonine). Phosphoserine is present on serine 52. Polar residues predominate over residues 153 to 165 (LPTQDTANVNPFT). Threonine 165 carries the phosphothreonine modification. The residue at position 168 (serine 168) is a Phosphoserine. Residues 239 to 517 (FMQVNVIGVG…SQSIFSHPIL (279 aa)) enclose the Protein kinase domain. Residues 245–253 (IGVGEFGVV) and lysine 268 contribute to the ATP site. Residue aspartate 361 is the Proton acceptor of the active site. Positions 366 and 412 each coordinate Mg(2+).

It belongs to the protein kinase superfamily. Ser/Thr protein kinase family. WEE1 subfamily. It depends on Mg(2+) as a cofactor. Post-translationally, phosphorylated during M and G1 phases. Expressed in embryos; expression remains high in the proliferating cells of the central nervous system well after cells in the rest of the embryo have ceased dividing.

Its subcellular location is the nucleus. The enzyme catalyses L-tyrosyl-[protein] + ATP = O-phospho-L-tyrosyl-[protein] + ADP + H(+). Negatively regulated by phosphorylation in the M-phase. Functionally, acts as a negative regulator of entry into mitosis (G2 to M transition). This kinase specifically phosphorylates and inactivates cyclin B1-complexed CDC2. The protein is Wee1-like protein kinase of Drosophila melanogaster (Fruit fly).